The primary structure comprises 224 residues: Holliday junction branch migration complex subunit RuvA (224 aa).

Residues 1–64 are domain I; the sequence is MIGRLSGVLV…EDLLQLYGFP (64 aa). The segment at 65 to 143 is domain II; the sequence is TLLEKEWHRL…EVMAMGGTLE (79 aa). Residues 144–171 form a flexible linker region; that stretch reads AALDGVIEDGMAASEGIEPPSAARPAVP. The domain III stretch occupies residues 172–224; it reads SAASDQAGALSALVNLGYGQGEAASAVATAAGEGAVGETDIIRAALRLLAPKG.

Belongs to the RuvA family. Homotetramer. Forms an RuvA(8)-RuvB(12)-Holliday junction (HJ) complex. HJ DNA is sandwiched between 2 RuvA tetramers; dsDNA enters through RuvA and exits via RuvB. An RuvB hexamer assembles on each DNA strand where it exits the tetramer. Each RuvB hexamer is contacted by two RuvA subunits (via domain III) on 2 adjacent RuvB subunits; this complex drives branch migration. In the full resolvosome a probable DNA-RuvA(4)-RuvB(12)-RuvC(2) complex forms which resolves the HJ.

The protein localises to the cytoplasm. Functionally, the RuvA-RuvB-RuvC complex processes Holliday junction (HJ) DNA during genetic recombination and DNA repair, while the RuvA-RuvB complex plays an important role in the rescue of blocked DNA replication forks via replication fork reversal (RFR). RuvA specifically binds to HJ cruciform DNA, conferring on it an open structure. The RuvB hexamer acts as an ATP-dependent pump, pulling dsDNA into and through the RuvAB complex. HJ branch migration allows RuvC to scan DNA until it finds its consensus sequence, where it cleaves and resolves the cruciform DNA. The polypeptide is Holliday junction branch migration complex subunit RuvA (Dinoroseobacter shibae (strain DSM 16493 / NCIMB 14021 / DFL 12)).